The chain runs to 237 residues: Demethylmenaquinone methyltransferase (237 aa).

Residues Thr62, Asp80, 102 to 103, and Ser119 contribute to the S-adenosyl-L-methionine site; that span reads DA.

It belongs to the class I-like SAM-binding methyltransferase superfamily. MenG/UbiE family.

The enzyme catalyses a 2-demethylmenaquinol + S-adenosyl-L-methionine = a menaquinol + S-adenosyl-L-homocysteine + H(+). It participates in quinol/quinone metabolism; menaquinone biosynthesis; menaquinol from 1,4-dihydroxy-2-naphthoate: step 2/2. Its function is as follows. Methyltransferase required for the conversion of demethylmenaquinol (DMKH2) to menaquinol (MKH2). The chain is Demethylmenaquinone methyltransferase from Renibacterium salmoninarum (strain ATCC 33209 / DSM 20767 / JCM 11484 / NBRC 15589 / NCIMB 2235).